A 476-amino-acid polypeptide reads, in one-letter code: METTTPKSLYMMTLGCPKNRVDSEVMLGTLRHRGYTLVQEASDAQVIVVNTCAFIGPAKQESVDSILEMAELKKSGACKTLVVTGCLSQRYGEELSKEMPEVDHFLGTSAYAQIGDLLAAEASPRQVIPDPDYIHDANTPRINSMPKYTAYLKISEGCDNACAFCIIPTLRGGQRSRPIDDIVAEAKQLADSGVQELNLVAQDLTAYGHDLPGRPKLHDLLKALVQVDVKWIRLHYAYPRIFPDELIEVMASEPKIARYLDMPVQHVSDKLLLSMKRGRNSEFLKGLLTKLRERVPGLVMRTSLIVGLPGETEEDFEMLKEFVKTQRFERLGVFQYSDEEGTAAYDLPDKVPQKLIERRWREVMAIQKRINREQNKKLVGKRLEVLVEGPAPETEHLLVGRHQGQAPDIDGMVYINDGLAYPGEIVTVEVTEAHDYDLVARVVERPDPKQREHTARDAHPAPLPVAAMQRPAPRAE.

The MTTase N-terminal domain occupies 7–123 (KSLYMMTLGC…IGDLLAAEAS (117 aa)). [4Fe-4S] cluster is bound by residues Cys-16, Cys-52, Cys-86, Cys-158, Cys-162, and Cys-165. The region spanning 144 to 373 (SMPKYTAYLK…MAIQKRINRE (230 aa)) is the Radical SAM core domain. The TRAM domain maps to 376-444 (KKLVGKRLEV…DYDLVARVVE (69 aa)). Basic and acidic residues predominate over residues 445–459 (RPDPKQREHTARDAH). Positions 445–476 (RPDPKQREHTARDAHPAPLPVAAMQRPAPRAE) are disordered.

Belongs to the methylthiotransferase family. RimO subfamily. [4Fe-4S] cluster serves as cofactor.

The protein localises to the cytoplasm. The enzyme catalyses L-aspartate(89)-[ribosomal protein uS12]-hydrogen + (sulfur carrier)-SH + AH2 + 2 S-adenosyl-L-methionine = 3-methylsulfanyl-L-aspartate(89)-[ribosomal protein uS12]-hydrogen + (sulfur carrier)-H + 5'-deoxyadenosine + L-methionine + A + S-adenosyl-L-homocysteine + 2 H(+). Functionally, catalyzes the methylthiolation of an aspartic acid residue of ribosomal protein uS12. The polypeptide is Ribosomal protein uS12 methylthiotransferase RimO (Myxococcus xanthus (strain DK1622)).